The following is a 360-amino-acid chain: Phosphoserine aminotransferase (360 aa).

R42 contributes to the L-glutamate binding site. Residues W102, T152, D171, and Q194 each contribute to the pyridoxal 5'-phosphate site. Position 195 is an N6-(pyridoxal phosphate)lysine (K195). 237-238 (NT) is a pyridoxal 5'-phosphate binding site.

The protein belongs to the class-V pyridoxal-phosphate-dependent aminotransferase family. SerC subfamily. Homodimer. Pyridoxal 5'-phosphate is required as a cofactor.

The protein resides in the cytoplasm. It catalyses the reaction O-phospho-L-serine + 2-oxoglutarate = 3-phosphooxypyruvate + L-glutamate. The enzyme catalyses 4-(phosphooxy)-L-threonine + 2-oxoglutarate = (R)-3-hydroxy-2-oxo-4-phosphooxybutanoate + L-glutamate. It functions in the pathway amino-acid biosynthesis; L-serine biosynthesis; L-serine from 3-phospho-D-glycerate: step 2/3. It participates in cofactor biosynthesis; pyridoxine 5'-phosphate biosynthesis; pyridoxine 5'-phosphate from D-erythrose 4-phosphate: step 3/5. Functionally, catalyzes the reversible conversion of 3-phosphohydroxypyruvate to phosphoserine and of 3-hydroxy-2-oxo-4-phosphonooxybutanoate to phosphohydroxythreonine. The protein is Phosphoserine aminotransferase of Coxiella burnetii (strain CbuK_Q154) (Coxiella burnetii (strain Q154)).